We begin with the raw amino-acid sequence, 180 residues long: Interleukin-17B (180 aa).

Residues Met-1 to Gly-20 form the signal peptide. Positions Pro-22–Gln-44 are disordered. The N-linked (GlcNAc...) asparagine glycan is linked to Asn-75. Cystine bridges form between Cys-121/Cys-176 and Cys-126/Cys-178.

This sequence belongs to the IL-17 family. Expressed in adult pancreas, small intestine, stomach, spinal cord and testis. Less pronounced expression in prostate, colon mucosal lining, and ovary.

It localises to the secreted. Stimulates the release of tumor necrosis factor alpha and IL-1-beta from the monocytic cell line THP-1. This chain is Interleukin-17B (IL17B), found in Homo sapiens (Human).